Here is a 105-residue protein sequence, read N- to C-terminus: L-rhamnose mutarotase (105 aa).

Substrate is bound at residue Y19. The Proton donor role is filled by H23. Substrate-binding positions include Y42 and 77–78 (WW).

It belongs to the rhamnose mutarotase family. In terms of assembly, homodimer.

The protein resides in the cytoplasm. It catalyses the reaction alpha-L-rhamnose = beta-L-rhamnose. It participates in carbohydrate metabolism; L-rhamnose metabolism. In terms of biological role, involved in the anomeric conversion of L-rhamnose. The polypeptide is L-rhamnose mutarotase (Mesorhizobium japonicum (strain LMG 29417 / CECT 9101 / MAFF 303099) (Mesorhizobium loti (strain MAFF 303099))).